The following is a 601-amino-acid chain: Elongation factor 4 (601 aa).

In terms of domain architecture, tr-type G spans Arg7 to Lys189. GTP is bound by residues Asp19–Thr24 and Asn136–Asp139.

This sequence belongs to the TRAFAC class translation factor GTPase superfamily. Classic translation factor GTPase family. LepA subfamily.

The protein localises to the cell inner membrane. The catalysed reaction is GTP + H2O = GDP + phosphate + H(+). In terms of biological role, required for accurate and efficient protein synthesis under certain stress conditions. May act as a fidelity factor of the translation reaction, by catalyzing a one-codon backward translocation of tRNAs on improperly translocated ribosomes. Back-translocation proceeds from a post-translocation (POST) complex to a pre-translocation (PRE) complex, thus giving elongation factor G a second chance to translocate the tRNAs correctly. Binds to ribosomes in a GTP-dependent manner. The protein is Elongation factor 4 of Xanthomonas axonopodis pv. citri (strain 306).